Here is a 243-residue protein sequence, read N- to C-terminus: MEGNFFIRSDAQRAHDNGFIAKQKPNLTTAPTAGQANESGCFDCNICLDTAHDPVVTLCGHLFCWPCIYKWLHVQLSSVSVDQHQNNCPVCKSNITITSLVPLYGRGMSSPSSTFGSKKQDALSTDIPRRPAPSALRNPITSASSLNPSLQHQTLSPSFHNHQYSPRGFTTTESTDLANAVMMSFLYPVIGMFGDLVYTRIFGTFTNTIAQPYQSQRMMQREKSLNRVSIFFLCCIILCLLLF.

The segment at 44–92 (CNICLDTAHDPVVTLCGHLFCWPCIYKWLHVQLSSVSVDQHQNNCPVCK) adopts an RING-type zinc-finger fold. The disordered stretch occupies residues 110-135 (SPSSTFGSKKQDALSTDIPRRPAPSA). A helical; Anchor for type IV membrane protein membrane pass occupies residues 223-243 (KSLNRVSIFFLCCIILCLLLF).

Ubiquitous. Highly expressed in roots.

It localises to the endoplasmic reticulum membrane. It catalyses the reaction S-ubiquitinyl-[E2 ubiquitin-conjugating enzyme]-L-cysteine + [acceptor protein]-L-lysine = [E2 ubiquitin-conjugating enzyme]-L-cysteine + N(6)-ubiquitinyl-[acceptor protein]-L-lysine.. The protein operates within protein modification; protein ubiquitination. Its function is as follows. E3 ubiquitin-protein ligase. This Arabidopsis thaliana (Mouse-ear cress) protein is E3 ubiquitin-protein ligase RMA3 (RMA3).